The primary structure comprises 293 residues: Elongation factor Ts (293 aa).

The tract at residues 80–83 (TDFV) is involved in Mg(2+) ion dislocation from EF-Tu.

This sequence belongs to the EF-Ts family.

It is found in the cytoplasm. In terms of biological role, associates with the EF-Tu.GDP complex and induces the exchange of GDP to GTP. It remains bound to the aminoacyl-tRNA.EF-Tu.GTP complex up to the GTP hydrolysis stage on the ribosome. The chain is Elongation factor Ts from Burkholderia thailandensis (strain ATCC 700388 / DSM 13276 / CCUG 48851 / CIP 106301 / E264).